The following is a 311-amino-acid chain: tRNA dimethylallyltransferase (311 aa).

Residue 12 to 19 (GPTASGKT) participates in ATP binding. 14–19 (TASGKT) serves as a coordination point for substrate. 2 interaction with substrate tRNA regions span residues 37–40 (DSAM) and 161–165 (QRIQR).

This sequence belongs to the IPP transferase family. As to quaternary structure, monomer. Requires Mg(2+) as cofactor.

The enzyme catalyses adenosine(37) in tRNA + dimethylallyl diphosphate = N(6)-dimethylallyladenosine(37) in tRNA + diphosphate. Catalyzes the transfer of a dimethylallyl group onto the adenine at position 37 in tRNAs that read codons beginning with uridine, leading to the formation of N6-(dimethylallyl)adenosine (i(6)A). The protein is tRNA dimethylallyltransferase of Coxiella burnetii (strain RSA 331 / Henzerling II).